The following is a 171-amino-acid chain: Myelin basic protein (171 aa).

Ala1 carries the N-acetylalanine modification. Basic residues predominate over residues 1 to 12 (ASQKRPSQRHGS). The tract at residues 1-171 (ASQKRPSQRH…SRSGSPMARR (171 aa)) is disordered. Phosphoserine occurs at positions 7 and 12. Tyr14 carries the phosphotyrosine modification. A Phosphoserine modification is found at Ser19. Phosphothreonine is present on Thr20. A citrulline mark is found at Arg25 and Arg31. A Phosphothreonine modification is found at Thr35. Ser39 is subject to Phosphoserine. Omega-N-methylarginine is present on residues Arg42 and Arg48. A Phosphoserine modification is found at Ser55. Thr66 carries the phosphothreonine modification. Phosphotyrosine is present on Tyr68. 2 positions are modified to phosphothreonine: Thr95 and Thr98. Position 103 is a deamidated glutamine (Gln103). Arg107 carries the post-translational modification Omega-N-methylarginine; alternate. Arg107 carries the post-translational modification Symmetric dimethylarginine; alternate. Position 115 is a phosphoserine (Ser115). Lys122 is modified (N6-acetyllysine). At Arg130 the chain carries Citrulline. At Gln148 the chain carries Deamidated glutamine. Arg160 is modified (citrulline). Ser162 is subject to Phosphoserine. Ser166 bears the Phosphoserine; by UHMK1 mark. Residue Arg171 is modified to Citrulline.

It belongs to the myelin basic protein family. Homodimer. Post-translationally, as in other animals, several charge isomers may be produced as a result of optional post-translational modifications, such as phosphorylation of serine or threonine residues, deamidation of glutamine or asparagine residues, citrullination and methylation of arginine residues. In terms of processing, phosphorylated by TAOK2, VRK2, MAPK11, MAPK12, MAPK14 and MINK1. Proteolytically cleaved in B cell lysosomes by cathepsin CTSG which degrades the major immunogenic MBP epitope and prevents the activation of MBP-specific autoreactive T cells.

Its subcellular location is the myelin membrane. Functionally, is, with PLP, the most abundant protein component of the myelin membrane in the CNS. Has a role in both the formation and stabilization of this compact multilayer arrangement of bilayers. Each splice variant and charge isomer may have a specialized function in the assembly of an optimized, biochemically functional myelin membrane. The chain is Myelin basic protein (MBP) from Sus scrofa (Pig).